Here is a 228-residue protein sequence, read N- to C-terminus: Small ribosomal subunit protein uS3 (228 aa).

One can recognise a KH type-2 domain in the interval 39–107 (VREYLQDKLK…PVHINIEEIR (69 aa)).

Belongs to the universal ribosomal protein uS3 family. As to quaternary structure, part of the 30S ribosomal subunit. Forms a tight complex with proteins S10 and S14.

Binds the lower part of the 30S subunit head. Binds mRNA in the 70S ribosome, positioning it for translation. The protein is Small ribosomal subunit protein uS3 of Pseudomonas fluorescens (strain ATCC BAA-477 / NRRL B-23932 / Pf-5).